Reading from the N-terminus, the 275-residue chain is MTSIAHERFHAVAEEPAYARENAPAVSRSAPAAISLTGLEKSFGGNRVLRGINLHIPAGQFVAVIGKSGCGKSTLLRILMGLDEPSAGELHFEDADGAQASPNARIVFQEPRLLPWLSVADNVVVGLGDGVDSRAAAKAAEAVLAEVQLGEKTEEWPARLSGGQRQRVALARALISRPGVLALDEPLGALDALTRISMQELINRVWRELGFTAVLVTHDVSEAVHLADRVIVLDEGRIALDLPIPHPRPRRHGHPGLCELEGRLLAAILGTDGGH.

The ABC transporter domain occupies 34–260 (ISLTGLEKSF…RHGHPGLCEL (227 aa)). 66–73 (GKSGCGKS) is an ATP binding site.

The protein belongs to the ABC transporter superfamily. Aliphatic sulfonates importer (TC 3.A.1.17.2) family. As to quaternary structure, the complex is composed of two ATP-binding proteins (SsuB), two transmembrane proteins (SsuC) and a solute-binding protein (SsuA).

It is found in the cell inner membrane. It carries out the reaction ATP + H2O + aliphatic sulfonate-[sulfonate-binding protein]Side 1 = ADP + phosphate + aliphatic sulfonateSide 2 + [sulfonate-binding protein]Side 1.. Its function is as follows. Part of the ABC transporter complex SsuABC involved in aliphatic sulfonates import. Responsible for energy coupling to the transport system. The sequence is that of Aliphatic sulfonates import ATP-binding protein SsuB 1 from Rhizobium johnstonii (strain DSM 114642 / LMG 32736 / 3841) (Rhizobium leguminosarum bv. viciae).